Here is a 299-residue protein sequence, read N- to C-terminus: Epimerase family protein SERP0438 (299 aa).

The protein belongs to the NAD(P)-dependent epimerase/dehydratase family. SDR39U1 subfamily.

The polypeptide is Epimerase family protein SERP0438 (Staphylococcus epidermidis (strain ATCC 35984 / DSM 28319 / BCRC 17069 / CCUG 31568 / BM 3577 / RP62A)).